A 1014-amino-acid chain; its full sequence is Pre-mRNA-processing ATP-dependent RNA helicase prp11 (1014 aa).

Residues 1–11 (MSRRTRSRSPP) show a composition bias toward basic residues. The disordered stretch occupies residues 1–149 (MSRRTRSRSP…SRFDRTERVG (149 aa)). 2 stretches are compositionally biased toward basic and acidic residues: residues 15-87 (YNRE…EYAR) and 106-121 (RHAE…KSDE). The Q motif signature appears at 418-446 (TSWSQCGLSAQTISVINSLGYEKPTSIQA). A Helicase ATP-binding domain is found at 449 to 627 (IPAITSGRDV…RKVLKKPVEI (179 aa)). 462–469 (AKTGSGKT) is a binding site for ATP. Residues 575-578 (DEAD) carry the DEAD box motif. The Helicase C-terminal domain occupies 638–802 (EVEQIVEVRP…PVPKELQTLA (165 aa)). Residues 815 to 875 (KAAGGGFGGK…PEKSTGDPTL (61 aa)) are disordered. Composition is skewed to basic and acidic residues over residues 827 to 838 (SRLDETRNAERK) and 855 to 875 (AEAK…DPTL).

It belongs to the DEAD box helicase family. DDX46/PRP5 subfamily.

The protein resides in the nucleus. The catalysed reaction is ATP + H2O = ADP + phosphate + H(+). ATP-dependent RNA helicase involved in pre-spliceosome/complex A assembly and mRNA splicing. Bridges U1 and U2 snRNPs during pre-spliceosome assembly and enables stable U2 snRNP association with intron RNA. Through its helicase activity probably catalyzes an ATP-dependent conformational change of U2 snRNP. The protein is Pre-mRNA-processing ATP-dependent RNA helicase prp11 (prp11) of Schizosaccharomyces pombe (strain 972 / ATCC 24843) (Fission yeast).